The following is a 303-amino-acid chain: uncharacterized protein (303 aa).

Residues 1 to 24 (MNRIALVFLYSLFLFNLAIGRVES) form the signal peptide. Asn-116 is a glycosylation site (N-linked (GlcNAc...) asparagine). A disordered region spans residues 124 to 179 (FTRQQQKKSHDDDDDDDDSDSDESKEEEEKKKRDRKHRRDKRQAITQGSQNNTDPN). The span at 135-149 (DDDDDDDSDSDESKE) shows a compositional bias: acidic residues. The span at 155-164 (KRDRKHRRDK) shows a compositional bias: basic residues. Residues 167–178 (AITQGSQNNTDP) show a composition bias toward polar residues.

This is an uncharacterized protein from Caenorhabditis elegans.